Consider the following 61-residue polypeptide: UPF0391 membrane protein Ajs_0703 (61 aa).

Helical transmembrane passes span Ala5–Ala25 and Val33–Ile53.

This sequence belongs to the UPF0391 family.

The protein localises to the cell membrane. This is UPF0391 membrane protein Ajs_0703 from Acidovorax sp. (strain JS42).